The primary structure comprises 287 residues: ATP synthase gamma chain (287 aa).

It belongs to the ATPase gamma chain family. As to quaternary structure, F-type ATPases have 2 components, CF(1) - the catalytic core - and CF(0) - the membrane proton channel. CF(1) has five subunits: alpha(3), beta(3), gamma(1), delta(1), epsilon(1). CF(0) has three main subunits: a, b and c.

The protein resides in the cell inner membrane. Produces ATP from ADP in the presence of a proton gradient across the membrane. The gamma chain is believed to be important in regulating ATPase activity and the flow of protons through the CF(0) complex. In Alkalilimnicola ehrlichii (strain ATCC BAA-1101 / DSM 17681 / MLHE-1), this protein is ATP synthase gamma chain.